We begin with the raw amino-acid sequence, 678 residues long: uncharacterized protein (678 aa).

The next 2 helical transmembrane spans lie at leucine 14–leucine 34 and glycine 180–phenylalanine 200.

Belongs to the mycobacterial PPE family.

It localises to the cell membrane. This is an uncharacterized protein from Mycobacterium tuberculosis (strain CDC 1551 / Oshkosh).